Here is a 542-residue protein sequence, read N- to C-terminus: Tubby-related protein 1 (542 aa).

Positions 1 to 289 are disordered; that stretch reads MPLRDETLRE…RAPSPPVEVD (289 aa). Over residues 91 to 104 the composition is skewed to basic and acidic residues; the sequence is FLRDPEAKKRDPRE. Residues 114 to 132 show a composition bias toward acidic residues; it reads AEDEEEEEEEDEEDEEEEA. Over residues 146–157 the composition is skewed to basic and acidic residues; that stretch reads PLREKSSADLKE. A compositionally biased stretch (basic residues) spans 262 to 275; it reads SNQKGKAKGKGKKK.

This sequence belongs to the TUB family. As to quaternary structure, homodimer. May interact with ABCF1, PSIP1, ZEB1 and HMGB2 (Potential). Interacts with DNM1. Interacts with F-actin. Interacts with TUB. Interacts with TYRO3. Retina-specific.

It localises to the cytoplasm. Its subcellular location is the cell membrane. The protein resides in the secreted. The protein localises to the synapse. Functionally, required for normal development of photoreceptor synapses. Required for normal photoreceptor function and for long-term survival of photoreceptor cells. Interacts with cytoskeleton proteins and may play a role in protein transport in photoreceptor cells. Binds lipids, especially phosphatidylinositol 3-phosphate, phosphatidylinositol 4-phosphate, phosphatidylinositol 5-phosphate, phosphatidylinositol 3,4-bisphosphate, phosphatidylinositol 4,5-bisphosphate, phosphatidylinositol 3,4,5-bisphosphate, phosphatidylserine and phosphatidic acid (in vitro). Contribute to stimulation of phagocytosis of apoptotic retinal pigment epithelium (RPE) cells and macrophages. The polypeptide is Tubby-related protein 1 (TULP1) (Homo sapiens (Human)).